A 381-amino-acid chain; its full sequence is Dual specificity protein phosphatase 6 (381 aa).

The Rhodanese domain occupies 30–148 (GNEQLLLMDC…FQAEFALHCE (119 aa)). Positions 176 to 203 (SSSDIESDLDRDPNSATDSDGSPLSNSQ) are disordered. Polar residues predominate over residues 189 to 203 (NSATDSDGSPLSNSQ). Positions 206-349 (FPVEILPFLY…LLDFERTLGL (144 aa)) constitute a Tyrosine-protein phosphatase domain. The active-site Phosphocysteine intermediate is Cys-293.

Belongs to the protein-tyrosine phosphatase family. Non-receptor class dual specificity subfamily. Interacts with MAPK1/ERK2. Post-translationally, ubiquitinated by the SCF(FBXO31) complex, leading to its proteasomal degradation. Expressed in lung, heart, brain, and kidney, but not significantly in skeletal muscle or testis.

The protein localises to the cytoplasm. It catalyses the reaction O-phospho-L-tyrosyl-[protein] + H2O = L-tyrosyl-[protein] + phosphate. It carries out the reaction O-phospho-L-seryl-[protein] + H2O = L-seryl-[protein] + phosphate. The catalysed reaction is O-phospho-L-threonyl-[protein] + H2O = L-threonyl-[protein] + phosphate. In terms of biological role, dual specificity protein phosphatase, which mediates dephosphorylation and inactivation of MAP kinases. Has a specificity for the ERK family. Implicated in muscle and neuronal differentiation. Plays an important role in alleviating chronic postoperative pain. Necessary for the normal dephosphorylation of the long-lasting phosphorylated forms of spinal MAPK1/3 and MAP kinase p38 induced by peripheral surgery, which drives the resolution of acute postoperative allodynia. Also important for dephosphorylation of MAPK1/3 in local wound tissue, which further contributes to resolution of acute pain. The chain is Dual specificity protein phosphatase 6 (Dusp6) from Rattus norvegicus (Rat).